The primary structure comprises 226 residues: UPF0173 metal-dependent hydrolase GTNG_2675 (226 aa).

It belongs to the UPF0173 family.

The polypeptide is UPF0173 metal-dependent hydrolase GTNG_2675 (Geobacillus thermodenitrificans (strain NG80-2)).